The following is a 208-amino-acid chain: Large ribosomal subunit protein uL3 (208 aa).

The disordered stretch occupies residues 124 to 146 (HGQSRGPMAHGSRYHRRPGSMGP).

This sequence belongs to the universal ribosomal protein uL3 family. As to quaternary structure, part of the 50S ribosomal subunit. Forms a cluster with proteins L14 and L19.

One of the primary rRNA binding proteins, it binds directly near the 3'-end of the 23S rRNA, where it nucleates assembly of the 50S subunit. The polypeptide is Large ribosomal subunit protein uL3 (Streptococcus thermophilus (strain ATCC BAA-491 / LMD-9)).